We begin with the raw amino-acid sequence, 294 residues long: 4-diphosphocytidyl-2-C-methyl-D-erythritol kinase (294 aa).

Lys19 is a catalytic residue. 106–116 (PVASGIGGGSA) provides a ligand contact to ATP. The active site involves Asp148.

It belongs to the GHMP kinase family. IspE subfamily.

The enzyme catalyses 4-CDP-2-C-methyl-D-erythritol + ATP = 4-CDP-2-C-methyl-D-erythritol 2-phosphate + ADP + H(+). Its pathway is isoprenoid biosynthesis; isopentenyl diphosphate biosynthesis via DXP pathway; isopentenyl diphosphate from 1-deoxy-D-xylulose 5-phosphate: step 3/6. In terms of biological role, catalyzes the phosphorylation of the position 2 hydroxy group of 4-diphosphocytidyl-2C-methyl-D-erythritol. The polypeptide is 4-diphosphocytidyl-2-C-methyl-D-erythritol kinase (Rhizobium etli (strain ATCC 51251 / DSM 11541 / JCM 21823 / NBRC 15573 / CFN 42)).